The primary structure comprises 236 residues: Phosphoribosylaminoimidazole-succinocarboxamide synthase (236 aa).

Belongs to the SAICAR synthetase family.

The enzyme catalyses 5-amino-1-(5-phospho-D-ribosyl)imidazole-4-carboxylate + L-aspartate + ATP = (2S)-2-[5-amino-1-(5-phospho-beta-D-ribosyl)imidazole-4-carboxamido]succinate + ADP + phosphate + 2 H(+). It participates in purine metabolism; IMP biosynthesis via de novo pathway; 5-amino-1-(5-phospho-D-ribosyl)imidazole-4-carboxamide from 5-amino-1-(5-phospho-D-ribosyl)imidazole-4-carboxylate: step 1/2. In Akkermansia muciniphila (strain ATCC BAA-835 / DSM 22959 / JCM 33894 / BCRC 81048 / CCUG 64013 / CIP 107961 / Muc), this protein is Phosphoribosylaminoimidazole-succinocarboxamide synthase.